The primary structure comprises 238 residues: Tetraspanin-4 (238 aa).

At 1 to 13 the chain is on the cytoplasmic side; it reads MARACLQAVKYLM. Residues 14-34 form a helical membrane-spanning segment; that stretch reads FAFNLLFWLGGCGVLGVGIWL. Over 35-55 the chain is Extracellular; it reads AATQGSFATLSSSFPSLSAAN. A helical membrane pass occupies residues 56–76; the sequence is LLIITGAFVMAIGFVGCLGAI. Residues 77–85 are Cytoplasmic-facing; that stretch reads KENKCLLLT. A helical transmembrane segment spans residues 86-106; the sequence is FFLLLLLVFLLEATIAILFFA. Residues 107-201 lie on the Extracellular side of the membrane; it reads YTDKIDRYAQ…ETVKVWLQEN (95 aa). Residues Asn152 and Asn161 are each glycosylated (N-linked (GlcNAc...) asparagine). The helical transmembrane segment at 202-222 threads the bilayer; that stretch reads LLAVGIFGLCTALVQILGLTF. Residues 223-238 lie on the Cytoplasmic side of the membrane; that stretch reads AMTMYCQVVKADTYCA.

Belongs to the tetraspanin (TM4SF) family. In terms of assembly, forms a complex with integrins.

The protein localises to the membrane. The protein is Tetraspanin-4 (TSPAN4) of Pongo abelii (Sumatran orangutan).